The following is a 4540-amino-acid chain: MEESETQLNVKVQEQGKLYSANEIENFNQYLSAICLSLLIIDKDQWNVACHEDVNQQNICQFLSDSQIKALIVSKTVENEKFNIQIRSEYEASNNYAHTICFLKRHTFQYDNQLQPQQFSNHVQVINVGYAESQGGANPFTLSHNYVQNCFIPIFTQYKGEIDKKRIVDQSSYNDLIKKLNEVNLAFIKCRQNVEVPEIILQFDPRIKEAVKQRGGKPTIEDAAQLNKPDIVQSISQTVTRWISDINQISNTKLELTNASIVDEINYWMSMERSLFFIENQLKQPEVDFTIEVLTQAKKMNITAQFKEIALKQSLQKCQSCNQFMKEFPINNLLIATNLVEIKDAMIQIFQHMKKLSNIQETYTIPRSLQLAESFSRELTNEMIKYFKGFQILHIKYVDFKGLIIKTQEIFSQWDEEYKIFKQSIVKKSVHQKDQYGQFEHIKLQKQIQHIQRLREMHENLKEVIEQIIQNDQEEQKENVQQFATLQEIQQAYDIFKNVEVFDLSRDGEDQFFRALKQYEIAIESVEATITTNLRDSLGSASSAKEMFRILAKFNKLFSRPRIKGAIQEYQSQLLKTVHKDIQSLQNKFKETYQKSQNSRLASARDIPLTSGFVIWSKQLQIRLQKYMQKVEQILGPQWAEDTDGKKCKEMGETFERILDSGPALEDWKQEINHHNKAVSQNEKLFEVVTRRRGLEIRVNYEKKLSQLFKEVRNLSNMKTKVPYSISHIANDAKASYPFALSLQESLHTYIQITSQLNAKSAKLVAALRKEVQLQIGQGFNYLWTHKTQLQPYVKKFTDKVFELEQAVNGLNERIGQIESLCEAMKTCPVDSLADKLKDIQEVIDSLCFNNFSNLHIWIQDIDKQIESILCDRVTVQMKEWLNQFINYQKIQERGLVNQTVVHELKLQDQIIYVDPPVEYAKYFWFQEFHKMIGQICSLPRLVANRFDNTIQQNTGPWGTQRDLDYSTTINKINQQLIKDAYSQIGQLLEDMEQYVQTWLNYQSLWELDIKQVEQILQDDIEKWQQMLTDIKQGRATFDNSTTEEHFGAIIIDYRMVQVKINHKYDAWHKELLNHFGNKFGEQLRVFNKNVTTEKEKLLKINFQDLTSDIIESITIIQEQDKKFPGWSADIESFKNGQKVLDRQRYQYPGDWLSFEQVEMQWNQFKQIRSKKLQSQESEMNNIQSKIQQDERYLNQQIQEIEEQWKTSKPDSGDCSPNEAEQILKSLNEQLISVQEKYEKCSQAKEILKMDPPTHQQKLNVLLESISDLQDVWQELGKIWKVMQSIKEQLISALQNKKIKDTCDEAQKQLNGVSTKTRNYDAFEKMKEKVKNYIKMNKLIMDLKDESMKERHWRQLLSKLKINESLNQLQMQHLWNANLLNYENLAKDIMTVARGEQVLETMISQVKDFWNSFELELVKYQTKCKLIRGWDELFQKLDEDLNNLASMKISPFYKTFEAEISQWDDKLQKVKLTMDIWIDVQRRWVYLEGIFFGSSDIKTQLQNEYNKFKDIDSQFTNLMKKVAQKPQLMDVQGIPNLAKTLERLSDFLQKIQKALGDYLETQRQAFARFYFVGDDDLLDIIGNSKDVTNVQRHFPKMYAGIVQLQSRKDGNDDVVLGMSSKEGEVVPFSKEVKIAEDPRINIWLGKVDNEMMNSLALDLEKSVLDIQANQQNRMKVIEEHPAQIILLALQVGWCFSVESSFNNEQQMKQTLQYVLEFLSELAESVLKDHPKQLRQKFEQIITDFVHQRDVIRLLMNNKINSKNDFGWQYHMRFNWNSKEADPGKRLLIQMGNAQFHYGFEYLGVAEKLVQTPLTDKCFLTLTQALHLRMGGSPFGPAGTGKTESVKALGAQLGRFVLVFNCDETFDFNAMGRIFVGLCQVGAWGCFDEFNRLEERMLSACSQQILLIQTGLREKQKQIELMGKDVKLSSQMGVFVTMNPGYAGRSNLPENLKQLFRQMAMVKPDRELIAQVMLFSQGFRTAEKLAGKIVSLFELCDNQLSSQPHYDFGLRALKSVLNSAGNMKRQEMIDRKQEPVPQSEIEEFEQTILLRSVCDTVVPKLIKDDIKLLETLLQGVFPGSCIPEIKEEQLRKELALACQRKNLQSSKNFIEKVLQLYQIQRLQHGLMLVGPCGCGKSAAWRVLLEAMYKCDKVKGEFYIVDPKAISKDELYGRLDNTTLEWTDGVFTSILRKIISNQRQESTRRHWIIFDGDVDPEWAENLNSVLDDNKLLTLPNGERLAIPPNVRMIFEVETLKYATLATVSRCGMVWFSEETINDENIFYHFLERLKQDDYDQQKSEDDNNKQVNSQESELRTKCVKALESIIKFLSQFLQIAQKPEYKHVMEFTRIRVLESTFALVRRSISNIIEYNENNSEVPLEDDQINDFMVKQFLIAVMWGVAGSMNLYQRTQYSKEICQLLPHNVILPQFNDSAPSLIDFEVTLPEAQWSQYKKKVPQIEIDPQRVTDADLIIETVDTLRHKDVLCGWLNEHRPFLLCGPPGSGKTMTLMSTLKALTDFEMIFINFSSSTMPQLIIKQFDHYCEYKKTTNGVFLQPKNQKWLVVFCDEINLPDQDKYGTMAIITFLRQLTEQHGFWRSSDRQWISLDRIQFVGACNPPTDVGRKPLTPRFLRHCPLILVDFPGPESLKQIYGTFNKAMLRRTVNLKQYSEQLTNAMVEFYTKSQQHFTADQQAHYIYSPRELTRWKYALNEALEPLESVEDLVRLWAHEGLRLFQDRLVHEHEKEWCNKLIDQVAYNNFNNLKDEALQRPILFSNYLHKVYQSVDREELRKYIQGRLKQFNEEELSVPLVVFDDVLDHILRIDRVLKQPLGHLLLVGSSGVGKTTLTRFVSWINNLTVFQIKAGRDYQLADFDNDLREVMKRAGAKGEKITFIFDESNVLGPSFLEKMNALLASGEIPGLFENDEYLALINLLKENSNQNKQFDSSEEQLFKNFTYQVQRNLHVVFTMNPKNPDFSNRTASSPALFNRCVIDWFGDWTNEALFQVGKAFTMYIDPPENAFSKKIKDETQRQHILVSTLVYIQNTIIELNNKLQKGAKRFNYITPRDYLDFLKHFEKLHNEKKSQLEDQQLHLNVGLDKLKETEQQVLEMQKSLDQKKVELLTKERQAGEKLQTIIEEKKIAEKKKEDSTRLSSDAEKKAKEMEVRQSQVNKELNEALPALENAKQCVNSIKKDDLNQIRALGSPPALVKLTMEAVVCAINSLEKSPEWKDVQKSMANMNFINNVINFNTETMPPKVKKFILTKYLSAQEWNIDRINFASKAAGPLAMWLDSQLKYADILQKVDPLRQEVAKLLQESDELNTQKKIYDDEVAAAEAKIHNLQQEYSELISQKESIKSEMLKVQEKVTRSQALLSDLSGERVRWEEASQNFKSQLATMIGDVLLLLAIPVLYWVLDHFYRKVVINTWKDYLSGQANIFYRQDLSLIEFLSRPSDRLNWQLHTLPSDDLCMENAIILYRFQRYPLVIDPSGQALSFISSLYKDKKLARTSFTDESFLKTLETCLRFGCPLLVQDVEKVDPILNSVLNNETYKTGGRVLIRVGNQEIDFSQGFTMFMITRDSTARFTPDLCSRVTFVNFTVTQSSLQEQCLNIFLRNESPETEEKRLNLMKLQGEYIVKLRELEDQLLDSLNNSRGSILEDEKVIQTLEKLKKEAAVIVQEMKQADTIMNEVMNTTHSYVPLANTTSKIFFSLTSLANIHYLYQFSLQFFMDTIYNVLNKNEQLQKIPKQDLIKRRILIFNEMFKEIYKRMNFSLLQEDKLVFAITLAQVKLGDNTLGQEFLNVFKPPTVMETTFSNTFLQGKLSIQQLKQLEGITQQNQTFNRLIDNLNKNEDRWLNFLNDEAPENDIPTQWYNEVQRDDIVKLDWIDSHQLKRQLDDLHILRIFRADRFQIIARKLINQILGEGFMDEQTVDMKLVVEKEASNKIPILLCSAPGFDPSFKVEQLSREMGIKLTSVAIGSAEGFDQAEYEITQSVKSGSWVMLKNVHLATSWLNDLEKKLFRLTPNANFRIFLTMEFNPKIPTTLIRQSYKLVFEPPDGIKASLIRTFKTVLSQQRTDRQPVERARLHFLLAWLHAVILERLRFTPIGWSKTYEFNEADQRCSLDLIDEYVDALGIRQNIDPSKLPWDAFRTILTQNLYGGKVDNEYDQKILQSLVEQFFTEQSFNHNHPLFFTLEGKEAITVPEGRTYLDFMQWIEQLPKTESPEWSGLPSNVERVQRDQLTQKLITKVQNLQQEGEEEITQIEVQTEKTQKKDNKKSDQVQWLQDLLEKVEKFKAILPNKISPLERTADSINDPLFRFLDREITVASKLLKAVRQNIEELIQLAQGKILATNILRQLAKDVFNNIVPAQWNKYNVITMPLNDWVGDFKRRIDQFDLLGKTKDFQKGQVWFGGLLFPEAYLTATRQYVAQANKWSLEELELQMIPEDQGIDEDSFVIEGVSMEGGHLDSKTLQVRIVNEISVALKPITLKWCKTSQKGVVGDDEIVLPVYLNKTRKNLIFSLKVKMGKLNRYTLYQKGLSFILFN.

Residues 1–1796 (MEESETQLNV…LIQMGNAQFH (1796 aa)) are stem. Coiled-coil stretches lie at residues 440 to 482 (EHIK…NVQQ), 698 to 722 (RVNYEKKLSQLFKEVRNLSNMKTKV), 794 to 827 (VKKFTDKVFELEQAVNGLNERIGQIESLCEAMKT), 975 to 995 (QQLIKDAYSQIGQLLEDMEQY), 1169 to 1251 (RSKK…LKMD), and 1295 to 1311 (QNKKIKDTCDEAQKQLN). 4 AAA regions span residues 1797–2018 (YGFE…VLNS), 2091–2348 (KELA…FTRI), 2457–2705 (EIDP…WKYA), and 2796–3056 (QFNE…AKRF). ATP-binding positions include 1835-1842 (GPAGTGKT), 2129-2136 (GPCGCGKS), 2496-2503 (GPPGSGKT), and 2834-2841 (GSSGVGKT). Coiled-coil stretches lie at residues 3076–3182 (NEKK…NAKQ), 3289–3367 (QLKY…RSQA), 3653–3688 (EDEKVIQTLEKLKKEAAVIVQEMKQADTIMNEVMNT), and 3820–3851 (QQLKQLEGITQQNQTFNRLIDNLNKNEDRWLN). Residues 3076-3367 (NEKKSQLEDQ…VQEKVTRSQA (292 aa)) are stalk. The interval 3140 to 3159 (KKKEDSTRLSSDAEKKAKEM) is disordered. The tract at residues 3444–3673 (LSRPSDRLNW…LKKEAAVIVQ (230 aa)) is AAA 5. Residues 3908 to 4123 (ARKLINQILG…QRCSLDLIDE (216 aa)) are AAA 6. Coiled coils occupy residues 4238 to 4259 (QKLITKVQNLQQEGEEEITQIE) and 4313 to 4342 (RFLDREITVASKLLKAVRQNIEELIQLAQG).

Belongs to the dynein heavy chain family. As to quaternary structure, consists of at least two heavy chains and a number of intermediate and light chains.

Its subcellular location is the cytoplasm. It localises to the cytoskeleton. Its function is as follows. Cytoplasmic dynein acts as a motor for the intracellular retrograde motility of vesicles and organelles along microtubules. Dynein has ATPase activity; the force-producing power stroke is thought to occur on release of ADP. The protein is Dynein heavy chain, cytoplasmic (DHC-8) of Paramecium tetraurelia.